The sequence spans 205 residues: MARGPRYKVPFRRRREGLTNYRKRRKLLLSKKPRLVVRKTNKHIIAQVVVAKPQGDVTIVGIDTRALAKFGWKGDENNTPAAYLLGLIVGYKARIRGVKEAVLDIGLHRPVAGSRVFAVLKGALDAGLEIPHGEEIIPSDDRISGKHIAEYAEKLKKENPELYKTRFSRYLQRGLAPEELPTHFEEVKKKIIEYYEGKLAKAIAQ.

The protein belongs to the universal ribosomal protein uL18 family. As to quaternary structure, part of the 50S ribosomal subunit. Contacts the 5S and 23S rRNAs.

Its function is as follows. This is one of the proteins that bind and probably mediate the attachment of the 5S RNA into the large ribosomal subunit, where it forms part of the central protuberance. In Pyrobaculum islandicum (strain DSM 4184 / JCM 9189 / GEO3), this protein is Large ribosomal subunit protein uL18.